The following is an 870-amino-acid chain: DNA mismatch repair protein MutS (870 aa).

629-636 (GPNMGGKS) lines the ATP pocket.

This sequence belongs to the DNA mismatch repair MutS family.

In terms of biological role, this protein is involved in the repair of mismatches in DNA. It is possible that it carries out the mismatch recognition step. This protein has a weak ATPase activity. The sequence is that of DNA mismatch repair protein MutS from Polaromonas naphthalenivorans (strain CJ2).